We begin with the raw amino-acid sequence, 280 residues long: Dihydropteroate synthase (280 aa).

The Pterin-binding domain occupies 1–265 (MSPAPVQVMG…DVRASVDAIK (265 aa)). Position 13 (Asn13) interacts with Mg(2+). Residues Asp86, Asn105, Asp177, Lys213, and 253–255 (RVH) contribute to the (7,8-dihydropterin-6-yl)methyl diphosphate site.

Belongs to the DHPS family. Homodimer. Mg(2+) is required as a cofactor.

It carries out the reaction (7,8-dihydropterin-6-yl)methyl diphosphate + 4-aminobenzoate = 7,8-dihydropteroate + diphosphate. The protein operates within cofactor biosynthesis; tetrahydrofolate biosynthesis; 7,8-dihydrofolate from 2-amino-4-hydroxy-6-hydroxymethyl-7,8-dihydropteridine diphosphate and 4-aminobenzoate: step 1/2. Functionally, catalyzes the condensation of para-aminobenzoate (pABA) with 6-hydroxymethyl-7,8-dihydropterin diphosphate (DHPt-PP) to form 7,8-dihydropteroate (H2Pte), the immediate precursor of folate derivatives. The sequence is that of Dihydropteroate synthase (folP1) from Mycobacterium bovis (strain ATCC BAA-935 / AF2122/97).